The sequence spans 341 residues: DNA-directed RNA polymerase subunit alpha (341 aa).

The alpha N-terminal domain (alpha-NTD) stretch occupies residues 1–237 (MLSLSKNWNA…EQLQLFISFE (237 aa)). Residues 252-341 (FSPYLLKRVD…LSKRYEDSYN (90 aa)) form an alpha C-terminal domain (alpha-CTD) region.

It belongs to the RNA polymerase alpha chain family. As to quaternary structure, homodimer. The RNAP catalytic core consists of 2 alpha, 1 beta, 1 beta' and 1 omega subunit. When a sigma factor is associated with the core the holoenzyme is formed, which can initiate transcription.

The catalysed reaction is RNA(n) + a ribonucleoside 5'-triphosphate = RNA(n+1) + diphosphate. In terms of biological role, DNA-dependent RNA polymerase catalyzes the transcription of DNA into RNA using the four ribonucleoside triphosphates as substrates. The sequence is that of DNA-directed RNA polymerase subunit alpha from Rickettsia bellii (strain OSU 85-389).